Here is a 492-residue protein sequence, read N- to C-terminus: Probable small intestine urate exporter (492 aa).

Positions 1-20 (MSTGADLKAREGDIPSDNMT) are disordered. N-linked (GlcNAc...) asparagine glycans are attached at residues N18, N44, N53, N63, N72, and N87. Helical transmembrane passes span 112 to 132 (LSYGSFIAPIPTGYVAGVFGA), 134 to 154 (YVVGLGLLISSVLTLFIPLAA), 156 to 176 (AGVALLIVLRVIQGMAQVMVL), 198 to 218 (IAASGSMLGTFLVLIAGGLIC), 225 to 245 (YIFYIFGGIGCACCLLWFPLV), 287 to 307 (LPLWAIVVSYFCEYWLLSTVM), 327 to 347 (ILSALPFMFGCVCIILGGLLA), 363 to 383 (KLFTAVGVLASSGILLPLPWV), 393 to 413 (FLVLSSVFASLCDSGALINFL), 426 to 446 (LLQVFSYLAGGIAPTVAGFFI), and 456 to 476 (NVFFLAAAIDVVGLLFYLIFS).

The protein belongs to the major facilitator superfamily. Sodium/anion cotransporter family. Expressed in the small intestine (at protein level).

Its subcellular location is the apical cell membrane. It carries out the reaction 3 Na(+)(out) + phosphate(out) = 3 Na(+)(in) + phosphate(in). The catalysed reaction is urate(out) + n chloride(in) = urate(in) + n chloride(out). It catalyses the reaction L-thyroxine(out) = L-thyroxine(in). The enzyme catalyses 3,3',5-triiodo-L-thyronine(out) = 3,3',5-triiodo-L-thyronine(in). Its function is as follows. Acts as a membrane potential-dependent organic anion transporter, the transport requires a low concentration of chloride ions. Mediates chloride-dependent transport of urate. Mediates sodium-independent high affinity transport of thyroid hormones including L-thyroxine (T4) and 3,3',5-triiodo-L-thyronine (T3). Can actively transport inorganic phosphate into cells via Na(+) cotransport. This chain is Probable small intestine urate exporter (Slc17a4), found in Mus musculus (Mouse).